The following is a 130-amino-acid chain: Phosphoribosyl-AMP cyclohydrolase (130 aa).

Asp-77 serves as a coordination point for Mg(2+). Position 78 (Cys-78) interacts with Zn(2+). 2 residues coordinate Mg(2+): Asp-79 and Asp-81. Residues Cys-95 and Cys-102 each coordinate Zn(2+).

It belongs to the PRA-CH family. Homodimer. The cofactor is Mg(2+). Requires Zn(2+) as cofactor.

Its subcellular location is the cytoplasm. The enzyme catalyses 1-(5-phospho-beta-D-ribosyl)-5'-AMP + H2O = 1-(5-phospho-beta-D-ribosyl)-5-[(5-phospho-beta-D-ribosylamino)methylideneamino]imidazole-4-carboxamide. The protein operates within amino-acid biosynthesis; L-histidine biosynthesis; L-histidine from 5-phospho-alpha-D-ribose 1-diphosphate: step 3/9. In terms of biological role, catalyzes the hydrolysis of the adenine ring of phosphoribosyl-AMP. In Pseudomonas syringae pv. syringae (strain B728a), this protein is Phosphoribosyl-AMP cyclohydrolase.